The primary structure comprises 838 residues: MFTFIPITHPTSDTKHPLLLVQSAHGEKYFFGKIGEGSQRSLTENKIRISKLKDIFLTGELNWSDIGGLPGMILTIADQGKSNLVLHYGNDILNYIVSTWRYFVFRFGIDLNDHIMKDKEVYKDKIIAVKSFNVLKNGGEDRLGVFDSFQKGVLRSIVAKMFPKHAPTDRYDPSSDPHLNVELPDLDAKVEVSTNYEISFSPVRGKFKVEEAIKLGVPKGPLFAKLTKGQTITLDNGIVVTPEQVLENERHFAKVLILDIPDDLYLNAFVEKFKDYDCAELGMVYYFLGDEVTINDNLFAFIDIFEKNNYGKVNHMISHNKISPNTISFFGSALTTLKLKALQVNNYNLPKTDRVFSKDFYDRFDTPLSRGTSMCKSQEEPLNTIIEKDNIHIFSQNKTVTFEPFRMNEEPMKCNINGEVADFSWQEIFEEHVKPLEFPLADVDTVINNQLHVDNFNNSAEKKKHVEIITLGTGSALPSKYRNVVSTLVKVPFTDADGNTINRNIMLDAGENTLGTIHRMFSQLAVKSIFQDLKMIYLSHLHADHHLGIISVLNEWYKYNKDDETSYIYVVTPWQYHKFVNEWLVLENKEILKRIKYISCEHFINDSFVRMQTQSVPLAEFNEILKENSNQESNRKLELDRDSSYRDVDLIRQMYEDLSIEYFQTCRAIHCDWAYSNSITFRMDENNEHNTFKVSYSGDTRPNIEKFSLEIGYNSDLLIHEATLENQLLEDAVKKKHCTINEAIGVSNKMNARKLILTHFSQRYPKLPQLDNNIDVMAREFCFAFDSMIVDYEKIGEQQRIFPLLNKAFVEEKEEEEDVDDVESVQDLEVKLKKHKKN.

Ser-824 carries the phosphoserine modification.

The protein belongs to the RNase Z family. Homodimer. Zn(2+) serves as cofactor.

The protein localises to the cytoplasm. Its subcellular location is the nucleus. The catalysed reaction is Endonucleolytic cleavage of RNA, removing extra 3' nucleotides from tRNA precursor, generating 3' termini of tRNAs. A 3'-hydroxy group is left at the tRNA terminus and a 5'-phosphoryl group is left at the trailer molecule.. In terms of biological role, zinc phosphodiesterase, which displays some tRNA 3'-processing endonuclease activity. Probably involved in tRNA maturation, by removing a 3'-trailer from precursor tRNA. This Saccharomyces cerevisiae (strain ATCC 204508 / S288c) (Baker's yeast) protein is Ribonuclease Z (TRZ1).